Consider the following 524-residue polypeptide: Peptide chain release factor 3 (524 aa).

A tr-type G domain is found at 10–278 (DSRRTFAIIS…TFLQFAPAPH (269 aa)). GTP is bound by residues 19–26 (SHPDAGKT), 87–91 (DTPGH), and 141–144 (NKLD).

Belongs to the TRAFAC class translation factor GTPase superfamily. Classic translation factor GTPase family. PrfC subfamily.

It localises to the cytoplasm. Increases the formation of ribosomal termination complexes and stimulates activities of RF-1 and RF-2. It binds guanine nucleotides and has strong preference for UGA stop codons. It may interact directly with the ribosome. The stimulation of RF-1 and RF-2 is significantly reduced by GTP and GDP, but not by GMP. This is Peptide chain release factor 3 from Enterococcus faecalis (strain ATCC 700802 / V583).